Here is a 209-residue protein sequence, read N- to C-terminus: Ribosomal RNA large subunit methyltransferase E (209 aa).

The S-adenosyl-L-methionine site is built by Gly-63, Trp-65, Asp-83, Asp-99, and Asp-124. Residue Lys-164 is the Proton acceptor of the active site.

The protein belongs to the class I-like SAM-binding methyltransferase superfamily. RNA methyltransferase RlmE family.

It is found in the cytoplasm. The enzyme catalyses uridine(2552) in 23S rRNA + S-adenosyl-L-methionine = 2'-O-methyluridine(2552) in 23S rRNA + S-adenosyl-L-homocysteine + H(+). Specifically methylates the uridine in position 2552 of 23S rRNA at the 2'-O position of the ribose in the fully assembled 50S ribosomal subunit. This Photorhabdus laumondii subsp. laumondii (strain DSM 15139 / CIP 105565 / TT01) (Photorhabdus luminescens subsp. laumondii) protein is Ribosomal RNA large subunit methyltransferase E.